Here is a 137-residue protein sequence, read N- to C-terminus: Partner of bursicon (137 aa).

An N-terminal signal peptide occupies residues 1-24 (MNIMITKIFFLVQLFYIVVSKSSA). Cystine bridges form between cysteine 28–cysteine 86, cysteine 52–cysteine 101, cysteine 61–cysteine 127, cysteine 65–cysteine 129, and cysteine 83–cysteine 132. A CTCK domain is found at 28–123 (CETVASEVHV…NALMEVRLRE (96 aa)).

In terms of assembly, heterodimer of burs and pburs.

Its subcellular location is the secreted. Functionally, final heterodimeric neurohormone released at the end of the molting cycle, involved in the sclerotization (tanning) of the insect cuticle, melanization and wing spreading. In Bombyx mori (Silk moth), this protein is Partner of bursicon.